The sequence spans 142 residues: Acidic phospholipase A2 Bc-PL (142 aa).

The first 9 residues, Ala1 to Ala9, serve as a signal peptide directing secretion. Positions Ala10–Leu17 are excised as a propeptide. Cystine bridges form between Cys28/Cys94, Cys44/Cys141, Cys46/Cys62, Cys61/Cys122, Cys68/Cys115, Cys78/Cys108, and Cys101/Cys113. Residues Tyr45, Gly47, and Gly49 each coordinate Ca(2+). Residue His65 is part of the active site. Asp66 provides a ligand contact to Ca(2+). Asp116 is an active-site residue.

The protein belongs to the phospholipase A2 family. Group I subfamily. D49 sub-subfamily. Requires Ca(2+) as cofactor. In terms of tissue distribution, expressed by the venom gland.

It is found in the secreted. The enzyme catalyses a 1,2-diacyl-sn-glycero-3-phosphocholine + H2O = a 1-acyl-sn-glycero-3-phosphocholine + a fatty acid + H(+). PLA2 catalyzes the calcium-dependent hydrolysis of the 2-acyl groups in 3-sn-phosphoglycerides. This chain is Acidic phospholipase A2 Bc-PL, found in Bungarus candidus (Malayan krait).